Here is a 332-residue protein sequence, read N- to C-terminus: 6-phosphogluconolactonase (332 aa).

The protein belongs to the cycloisomerase 2 family.

The catalysed reaction is 6-phospho-D-glucono-1,5-lactone + H2O = 6-phospho-D-gluconate + H(+). Its pathway is carbohydrate degradation; pentose phosphate pathway; D-ribulose 5-phosphate from D-glucose 6-phosphate (oxidative stage): step 2/3. Its function is as follows. Catalyzes the hydrolysis of 6-phosphogluconolactone to 6-phosphogluconate. The protein is 6-phosphogluconolactonase of Pectobacterium atrosepticum (strain SCRI 1043 / ATCC BAA-672) (Erwinia carotovora subsp. atroseptica).